The chain runs to 949 residues: Collagen alpha-2(I) chain (949 aa).

The interval 1 to 949 (SGGFDFSFLP…FGYEGDFYRA (949 aa)) is disordered. Pro-10, Pro-13, Pro-34, and Pro-40 each carry 4-hydroxyproline. A compositionally biased stretch (low complexity) spans 27 to 66 (LMGPRGPPGASGAPGPQGFQGPAGEPGEPGQTGPAGARGP). 5-hydroxylysine; alternate is present on Lys-95. Lys-95 carries an O-linked (Gal...) hydroxylysine; alternate glycan. 2 stretches are compositionally biased toward low complexity: residues 147–162 (SVGPVGPAGPIGSAGP) and 208–229 (PGANGLTGAKGAAGLPGVAGAP). Positions 263–272 (GESGGKGEPG) are enriched in gly residues. The segment covering 273–283 (SAGPQGPPGSS) has biased composition (low complexity). Residues 292–313 (NGEGSTGPTGPPGLRGGPGSRG) show a composition bias toward gly residues. 4-hydroxyproline occurs at positions 348 and 351. The segment covering 377-396 (LPGIDGRPGPIGPAGARGEA) has biased composition (low complexity). The segment covering 435-444 (GVQGGKGEQG) has biased composition (gly residues). Low complexity-rich tracts occupy residues 490–507 (PGESGAVGPSGAIGSRGP) and 519–529 (EPGVVGAPGTA). Residues 530–539 (GPAGSGGLPG) show a composition bias toward gly residues. Low complexity-rich tracts occupy residues 562-606 (VGTT…PRGS) and 613-633 (VGPAGPNGFAGPAGAAGQPGA). Residues 634-643 (KGERGTKGPK) are compositionally biased toward basic and acidic residues. Over residues 651–661 (PTGPVGSAGPA) the composition is skewed to low complexity. Residues 671-680 (GSRGDGGPPG) show a composition bias toward gly residues. Positions 682 to 691 (TGFPGAAGRT) are enriched in low complexity. The span at 722-736 (GPVGRGETGAGGPPG) shows a compositional bias: gly residues. Composition is skewed to low complexity over residues 737–771 (FTGEKGPSGEPGTAGPPGTAGPQGLLGAPGILGLP), 779–792 (LPGVAGAVGEPGPL), and 810–825 (EPGPVGSVGPVGALGP). Residues 835 to 846 (RGDKGEPGEKGP) show a composition bias toward basic and acidic residues. The segment covering 921–931 (PAGPPGPPGPP) has biased composition (pro residues).

It belongs to the fibrillar collagen family. As to quaternary structure, trimers of one alpha 2(I) and two alpha 1(I) chains. Interacts (via C-terminus) with TMEM131 (via PapD-L domain); the interaction is direct and is involved in assembly and TRAPPIII ER-to-Golgi transport complex-dependent secretion of collagen. In terms of processing, prolines at the third position of the tripeptide repeating unit (G-X-Y) are hydroxylated in some or all of the chains. As to expression, expressed in bones.

It is found in the secreted. It localises to the extracellular space. The protein resides in the extracellular matrix. Its function is as follows. Type I collagen is a member of group I collagen (fibrillar forming collagen). The sequence is that of Collagen alpha-2(I) chain from Acratocnus ye (Hispaniolan ground sloth).